Here is a 246-residue protein sequence, read N- to C-terminus: Octanoyltransferase (246 aa).

A BPL/LPL catalytic domain is found at 38–213; sequence AQQSDEFWVL…FLAKRLGLTP (176 aa). Substrate is bound by residues 77 to 84, 144 to 146, and 157 to 159; these read RGGQVTYH, SLG, and GLA. C175 functions as the Acyl-thioester intermediate in the catalytic mechanism. The disordered stretch occupies residues 225–246; sequence RQENVTTGGDPGSALTQQPERL.

Belongs to the LipB family.

Its subcellular location is the cytoplasm. It catalyses the reaction octanoyl-[ACP] + L-lysyl-[protein] = N(6)-octanoyl-L-lysyl-[protein] + holo-[ACP] + H(+). It participates in protein modification; protein lipoylation via endogenous pathway; protein N(6)-(lipoyl)lysine from octanoyl-[acyl-carrier-protein]: step 1/2. Catalyzes the transfer of endogenously produced octanoic acid from octanoyl-acyl-carrier-protein onto the lipoyl domains of lipoate-dependent enzymes. Lipoyl-ACP can also act as a substrate although octanoyl-ACP is likely to be the physiological substrate. The chain is Octanoyltransferase from Alcanivorax borkumensis (strain ATCC 700651 / DSM 11573 / NCIMB 13689 / SK2).